A 172-amino-acid polypeptide reads, in one-letter code: Adenine phosphoribosyltransferase (172 aa).

This sequence belongs to the purine/pyrimidine phosphoribosyltransferase family. In terms of assembly, homodimer.

Its subcellular location is the cytoplasm. It carries out the reaction AMP + diphosphate = 5-phospho-alpha-D-ribose 1-diphosphate + adenine. It functions in the pathway purine metabolism; AMP biosynthesis via salvage pathway; AMP from adenine: step 1/1. Its function is as follows. Catalyzes a salvage reaction resulting in the formation of AMP, that is energically less costly than de novo synthesis. In Methanococcus maripaludis (strain C5 / ATCC BAA-1333), this protein is Adenine phosphoribosyltransferase.